The chain runs to 652 residues: Acetyl-coenzyme A synthetase (652 aa).

Residues 193–196 (RRGK) and threonine 312 contribute to the CoA site. ATP contacts are provided by residues 388 to 390 (GEP), 412 to 417 (DTWWQT), aspartate 501, and arginine 516. A CoA-binding site is contributed by serine 524. 3 residues coordinate Mg(2+): valine 538, histidine 540, and valine 543. Lysine 611 carries the post-translational modification N6-acetyllysine.

The protein belongs to the ATP-dependent AMP-binding enzyme family. Mg(2+) is required as a cofactor. Post-translationally, acetylated. Deacetylation by the SIR2-homolog deacetylase activates the enzyme.

It carries out the reaction acetate + ATP + CoA = acetyl-CoA + AMP + diphosphate. Catalyzes the conversion of acetate into acetyl-CoA (AcCoA), an essential intermediate at the junction of anabolic and catabolic pathways. AcsA undergoes a two-step reaction. In the first half reaction, AcsA combines acetate with ATP to form acetyl-adenylate (AcAMP) intermediate. In the second half reaction, it can then transfer the acetyl group from AcAMP to the sulfhydryl group of CoA, forming the product AcCoA. This is Acetyl-coenzyme A synthetase from Streptomyces avermitilis (strain ATCC 31267 / DSM 46492 / JCM 5070 / NBRC 14893 / NCIMB 12804 / NRRL 8165 / MA-4680).